The chain runs to 258 residues: Proteasome subunit beta type-1 (258 aa).

This sequence belongs to the peptidase T1B family. The 26S proteasome consists of a 20S proteasome core and two 19S regulatory subunits. The 20S proteasome core is composed of 28 subunits that are arranged in four stacked rings, resulting in a barrel-shaped structure. The two end rings are each formed by seven alpha subunits, and the two central rings are each formed by seven beta subunits. The catalytic chamber with the active sites is on the inside of the barrel.

It is found in the cytoplasm. The protein localises to the nucleus. Functionally, non-catalytic component of the proteasome, a multicatalytic proteinase complex which is characterized by its ability to cleave peptides with Arg, Phe, Tyr, Leu, and Glu adjacent to the leaving group at neutral or slightly basic pH. The proteasome has an ATP-dependent proteolytic activity. This chain is Proteasome subunit beta type-1 (pbs-6), found in Caenorhabditis elegans.